The chain runs to 103 residues: MSEQKIRIRLKAFDHRLIDRSASEIVETAKRTGAQVRGPIPLPTKIERYTILVSPHADKDARDQYETRTHKRVLDIVDPNDKTVDALMKLELAAGVDVQIKLT.

It belongs to the universal ribosomal protein uS10 family. In terms of assembly, part of the 30S ribosomal subunit.

In terms of biological role, involved in the binding of tRNA to the ribosomes. The polypeptide is Small ribosomal subunit protein uS10 (Xanthomonas axonopodis pv. citri (strain 306)).